A 305-amino-acid chain; its full sequence is tRNA dimethylallyltransferase (305 aa).

Residue 8 to 15 coordinates ATP; the sequence is GPTAVGKT. 10-15 contacts substrate; that stretch reads TAVGKT. The interval 33 to 36 is interaction with substrate tRNA; that stretch reads DSRQ.

This sequence belongs to the IPP transferase family. As to quaternary structure, monomer. Mg(2+) serves as cofactor.

The catalysed reaction is adenosine(37) in tRNA + dimethylallyl diphosphate = N(6)-dimethylallyladenosine(37) in tRNA + diphosphate. Functionally, catalyzes the transfer of a dimethylallyl group onto the adenine at position 37 in tRNAs that read codons beginning with uridine, leading to the formation of N6-(dimethylallyl)adenosine (i(6)A). The protein is tRNA dimethylallyltransferase of Thermotoga petrophila (strain ATCC BAA-488 / DSM 13995 / JCM 10881 / RKU-1).